The sequence spans 520 residues: RNA-binding protein MEX3A (520 aa).

The segment at 49-111 (GLGEPPAPTA…QPPTAPKGAS (63 aa)) is disordered. Positions 60–69 (EDGGGGGGGA) are enriched in gly residues. Residues 73–91 (PAAPPQPAPPPPPAAPPAA) show a composition bias toward pro residues. 2 consecutive KH domains span residues 132 to 193 (TTEC…RREI) and 223 to 284 (QVTI…REEI). Serine 338 carries the post-translational modification Phosphoserine. The interval 412–461 (SSSSAKARAGPPGAHRSPATSAGPELAGLPRRPPGEPLQGFSKLGGGGLR) is disordered. Serine 462 carries the post-translational modification Phosphoserine. An RING-type zinc finger spans residues 469 to 509 (CMVCFESEVTAALVPCGHNLFCMECAVRICERTDPECPVCH).

Post-translationally, phosphorylated. As to expression, highest levels found in fetal brain and testis. Detected also in thymus, salivary gland and uterus.

It is found in the cytoplasm. The protein localises to the nucleus. Its subcellular location is the P-body. Functionally, RNA binding protein, may be involved in post-transcriptional regulatory mechanisms. This Homo sapiens (Human) protein is RNA-binding protein MEX3A (MEX3A).